Here is a 437-residue protein sequence, read N- to C-terminus: Serine hydroxymethyltransferase 1 (437 aa).

(6S)-5,6,7,8-tetrahydrofolate-binding positions include L132 and 136-138; that span reads GHL. Position 241 is an N6-(pyridoxal phosphate)lysine (K241).

It belongs to the SHMT family. As to quaternary structure, homodimer. The cofactor is pyridoxal 5'-phosphate.

It localises to the cytoplasm. The enzyme catalyses (6R)-5,10-methylene-5,6,7,8-tetrahydrofolate + glycine + H2O = (6S)-5,6,7,8-tetrahydrofolate + L-serine. It participates in one-carbon metabolism; tetrahydrofolate interconversion. The protein operates within amino-acid biosynthesis; glycine biosynthesis; glycine from L-serine: step 1/1. Functionally, catalyzes the reversible interconversion of serine and glycine with tetrahydrofolate (THF) serving as the one-carbon carrier. This reaction serves as the major source of one-carbon groups required for the biosynthesis of purines, thymidylate, methionine, and other important biomolecules. Also exhibits THF-independent aldolase activity toward beta-hydroxyamino acids, producing glycine and aldehydes, via a retro-aldol mechanism. This is Serine hydroxymethyltransferase 1 from Mesorhizobium japonicum (strain LMG 29417 / CECT 9101 / MAFF 303099) (Mesorhizobium loti (strain MAFF 303099)).